The sequence spans 487 residues: UDP-N-acetylmuramate--L-alanine ligase (487 aa).

126–132 is a binding site for ATP; that stretch reads GTHGKTT.

This sequence belongs to the MurCDEF family.

The protein localises to the cytoplasm. The catalysed reaction is UDP-N-acetyl-alpha-D-muramate + L-alanine + ATP = UDP-N-acetyl-alpha-D-muramoyl-L-alanine + ADP + phosphate + H(+). Its pathway is cell wall biogenesis; peptidoglycan biosynthesis. Cell wall formation. The protein is UDP-N-acetylmuramate--L-alanine ligase of Proteus mirabilis (strain HI4320).